The following is a 318-amino-acid chain: Annexin D6 (318 aa).

Ala2 carries the N-acetylalanine modification. 4 Annexin repeats span residues 11-82 (PLPE…LWTL), 83-154 (DPTE…PLVS), 168-239 (KLAR…TAIK), and 243-314 (YPEK…ALLG). Residues Phe24, Gly26, Gly28, and Glu68 each coordinate Ca(2+). A Phosphoserine modification is found at Ser95. Phosphothreonine occurs at positions 100 and 112. The residue at position 129 (Tyr129) is a Phosphotyrosine. Ca(2+)-binding residues include Ile256, Arg258, and Gly260. A Phosphotyrosine modification is found at Tyr285. At Ser290 the chain carries Phosphoserine. Positions 300 and 301 each coordinate Ca(2+).

It belongs to the annexin (TC 1.A.31.1) family. In terms of tissue distribution, expressed in flowers.

This chain is Annexin D6 (ANN6), found in Arabidopsis thaliana (Mouse-ear cress).